A 115-amino-acid chain; its full sequence is uncharacterized protein (115 aa).

This is an uncharacterized protein from Acanthamoeba polyphaga (Amoeba).